The following is a 205-amino-acid chain: Outer-membrane lipoprotein LolB (205 aa).

The first 17 residues, 1-17, serve as a signal peptide directing secretion; the sequence is MFLRHCITFTLIALLAG. Cysteine 18 carries N-palmitoyl cysteine lipidation. Cysteine 18 is lipidated: S-diacylglycerol cysteine.

It belongs to the LolB family. As to quaternary structure, monomer.

The protein resides in the cell outer membrane. Plays a critical role in the incorporation of lipoproteins in the outer membrane after they are released by the LolA protein. The chain is Outer-membrane lipoprotein LolB from Pseudomonas putida (strain W619).